We begin with the raw amino-acid sequence, 895 residues long: Receptor-like protein kinase FERONIA (895 aa).

The first 27 residues, methionine 1–alanine 27, serve as a signal peptide directing secretion. At alanine 28–alanine 447 the chain is on the extracellular side. Residues asparagine 46, asparagine 124, asparagine 142, asparagine 171, asparagine 219, asparagine 269, asparagine 305, asparagine 330, asparagine 345, and asparagine 410 are each glycosylated (N-linked (GlcNAc...) asparagine). Residues isoleucine 448–phenylalanine 468 form a helical membrane-spanning segment. Topologically, residues glycine 469–arginine 895 are cytoplasmic. In terms of domain architecture, Protein kinase spans phenylalanine 536–alanine 810. ATP-binding positions include leucine 542–valine 550 and lysine 565. Aspartate 661 serves as the catalytic Proton acceptor. Residues asparagine 844 to arginine 895 are disordered. Phosphoserine occurs at positions 858, 866, 871, and 874. Residues alanine 884–arginine 895 show a composition bias toward polar residues.

This sequence belongs to the protein kinase superfamily. Ser/Thr protein kinase family. Interacts with ROPGEF1. Interacts with RALF1; triggering phosphorylation status and subsequent activation. Interacts with LRE and LLG1. Interacts, via its extracellular domain, with FERONIA at the synergid cell surface. Autophosphorylated. Post-translationally, phosphorylated at Ser-858, Ser-871 and Ser-874 upon activation by RALF1. As to expression, expressed in leaves, buds, flowers, siliques, young ovules primordia, and young anthers with immature pollen, but not detected in mature pollen. Highest expression in the synergid cells of the female gametophyte.

It is found in the cell membrane. The catalysed reaction is L-seryl-[protein] + ATP = O-phospho-L-seryl-[protein] + ADP + H(+). It carries out the reaction L-threonyl-[protein] + ATP = O-phospho-L-threonyl-[protein] + ADP + H(+). Functionally, receptor-like protein kinase that mediates the female control of male gamete delivery during fertilization, including growth cessation of compatible pollen tubes ensuring a reproductive isolation barriers, by regulating MLO7 subcellular polarization upon pollen tube perception in the female gametophyte synergids. Required for cell elongation during vegetative growth, mostly in a brassinosteroids- (BR-) independent manner. Acts as an upstream regulator for the Rac/Rop-signaling pathway that controls ROS-mediated root hair development. Seems to regulate a cross-talk between brassinosteroids and ethylene signaling pathways during hypocotyl elongation. Negative regulator of brassinosteroid response in light-grown hypocotyls, but required for brassinosteroid response in etiolated seedlings. Mediates sensitivity to powdery mildew (e.g. Golovinomyces orontii). Positive regulator of auxin-promoted growth that represses the abscisic acid (ABA) signaling via the activation of ABI2 phosphatase. Required for RALF1-mediated extracellular alkalinization in a signaling pathway preventing cell expansion. The sequence is that of Receptor-like protein kinase FERONIA from Arabidopsis thaliana (Mouse-ear cress).